A 378-amino-acid polypeptide reads, in one-letter code: Chaperone protein DnaJ (378 aa).

The 66-residue stretch at 5–70 (DYYESLGVAK…QKRAAYDQYG (66 aa)) folds into the J domain. The CR-type zinc-finger motif lies at 133-211 (GVTKEIRIPA…CHGHGRVEKS (79 aa)). Cys146, Cys149, Cys163, Cys166, Cys185, Cys188, Cys199, and Cys202 together coordinate Zn(2+). 4 CXXCXGXG motif repeats span residues 146–153 (CDVCHGNG), 163–170 (CPTCHGNG), 185–192 (CPHCHGRG), and 199–206 (CVKCHGHG).

Belongs to the DnaJ family. In terms of assembly, homodimer. It depends on Zn(2+) as a cofactor.

It localises to the cytoplasm. In terms of biological role, participates actively in the response to hyperosmotic and heat shock by preventing the aggregation of stress-denatured proteins and by disaggregating proteins, also in an autonomous, DnaK-independent fashion. Unfolded proteins bind initially to DnaJ; upon interaction with the DnaJ-bound protein, DnaK hydrolyzes its bound ATP, resulting in the formation of a stable complex. GrpE releases ADP from DnaK; ATP binding to DnaK triggers the release of the substrate protein, thus completing the reaction cycle. Several rounds of ATP-dependent interactions between DnaJ, DnaK and GrpE are required for fully efficient folding. Also involved, together with DnaK and GrpE, in the DNA replication of plasmids through activation of initiation proteins. The polypeptide is Chaperone protein DnaJ (Pectobacterium carotovorum subsp. carotovorum (strain PC1)).